Here is a 269-residue protein sequence, read N- to C-terminus: Ribosomal RNA small subunit methyltransferase J (269 aa).

Residues 125–126 (ER) and D179 contribute to the S-adenosyl-L-methionine site.

Belongs to the methyltransferase superfamily. RsmJ family.

It is found in the cytoplasm. It catalyses the reaction guanosine(1516) in 16S rRNA + S-adenosyl-L-methionine = N(2)-methylguanosine(1516) in 16S rRNA + S-adenosyl-L-homocysteine + H(+). Functionally, specifically methylates the guanosine in position 1516 of 16S rRNA. In Pseudomonas savastanoi pv. phaseolicola (strain 1448A / Race 6) (Pseudomonas syringae pv. phaseolicola (strain 1448A / Race 6)), this protein is Ribosomal RNA small subunit methyltransferase J.